Here is a 437-residue protein sequence, read N- to C-terminus: MSDSGGGSHKSSTTKPSVFGLNLYLVIAICSVFILLISLLIFLFVCLNRVSRARRMRVKHSSGSIPLVSKEISEIKTVGKFINSDDSKGKIGNEVVVVVSATSKEATSGFDTLSVASSGDVGTSEAMGWGKWYSLKDLEIATRGFSDDNMIGEGGYGVVYRADFSDGSVAAVKNLLNNKGQAEKEFKVEVEAIGKVRHKNLVGLMGYCADSAQSQRMLVYEYIDNGNLEQWLHGDVGPVSPLTWDIRMKIAIGTAKGLAYLHEGLEPKVVHRDVKSSNILLDKKWNAKVSDFGLAKLLGSETSYVTTRVMGTFGYVSPEYASTGMLNECSDVYSFGVLLMEIITGRSPVDYSRPPGEMNLVDWFKGMVASRRGEEVIDPKIKTSPPPRALKRALLVCLRCIDLDSSKRPKMGQIIHMLEAEDFPFRPEHRSNQERSK.

Residues 25 to 45 (LVIAICSVFILLISLLIFLFV) traverse the membrane as a helical segment. The Protein kinase domain occupies 145–426 (FSDDNMIGEG…MLEAEDFPFR (282 aa)). ATP is bound by residues 151–159 (IGEGGYGVV) and Lys-173. Residue Tyr-220 is modified to Phosphotyrosine. The Proton acceptor role is filled by Asp-273. Phosphoserine is present on Ser-277. A phosphothreonine mark is found at Thr-307 and Thr-312. Residue Tyr-320 is modified to Phosphotyrosine.

It belongs to the protein kinase superfamily. Ser/Thr protein kinase family.

Its subcellular location is the cell membrane. It catalyses the reaction L-seryl-[protein] + ATP = O-phospho-L-seryl-[protein] + ADP + H(+). The enzyme catalyses L-threonyl-[protein] + ATP = O-phospho-L-threonyl-[protein] + ADP + H(+). The sequence is that of Probable receptor-like serine/threonine-protein kinase At4g34500 from Arabidopsis thaliana (Mouse-ear cress).